The sequence spans 327 residues: Methionine import ATP-binding protein MetN (327 aa).

The ABC transporter domain occupies 3 to 239 (VELKNIEKIY…PKHAVTKELL (237 aa)). 36 to 43 (GYSGAGKS) lines the ATP pocket.

Belongs to the ABC transporter superfamily. Methionine importer (TC 3.A.1.24) family. As to quaternary structure, the complex is composed of two ATP-binding proteins (MetN), two transmembrane proteins (MetI) and a solute-binding protein (MetQ).

Its subcellular location is the cell inner membrane. It catalyses the reaction L-methionine(out) + ATP + H2O = L-methionine(in) + ADP + phosphate + H(+). The catalysed reaction is D-methionine(out) + ATP + H2O = D-methionine(in) + ADP + phosphate + H(+). Functionally, part of the ABC transporter complex MetNIQ involved in methionine import. Responsible for energy coupling to the transport system. The sequence is that of Methionine import ATP-binding protein MetN from Helicobacter pylori (strain HPAG1).